The chain runs to 143 residues: Transcriptional regulator MraZ (143 aa).

2 SpoVT-AbrB domains span residues 5–47 (EYKH…SLKE) and 76–119 (ACEC…SEEN).

Belongs to the MraZ family. As to quaternary structure, forms oligomers.

The protein localises to the cytoplasm. It localises to the nucleoid. The chain is Transcriptional regulator MraZ from Caldicellulosiruptor saccharolyticus (strain ATCC 43494 / DSM 8903 / Tp8T 6331).